The chain runs to 674 residues: MKISELGYDRAFLQLFDGNDFQLYDHQRMAIEQIRKGRNVVVSVPTAAGKTLIAYSAIYETFQRNLKSIYIVPLRSLAMEKFSELSRLRDLGLKVKMSIGDYDDSPDFIKRYDAVILTSEKADSLLHHDPYILNDVGLLVLDEIHTIGDESRGPTLETVASIARYVNPDVRILALSATVSNAMELASWLDASLIKSDFRPVPLKTGILYRDQLYLDGKRRSGVSINQIIRETVEDNGQVLMFVSSRKKAEDTARDLAQIFGSDANIKISSDETNVYDDMLNEILPRGVAFHHAGLSNDQRAFIEREFRARRIKVIVATPTLAAGVNLPARLVIVRDITRWGSDGISYLTNMEIKQMIGRAGRPGYDQYGIGLIYVSSQSSYEAAKDYLSTDPEPVVSYLGNEAKVRFNTLAAISMGLARSPSDIMKFYETTLFFSQNGKDLLEEKISASLKFLEKNGFIKQSPDLRTTQLGKVTSDLYIDPESALRLVDFFDGPADVDHAIYYISLCREIVPFNIKDDYSAMEFLDDIGLIDGDIDAAKTAIVLRDWISEASYKYLYDKYGIAPGDMQARISMADWLSYSLAKLSSIYKPEVRRMLEILNLRIKEGIREDILQLVLIPGVGRVRARRLYDAGLRSIEDVASASPDRIKAIYGFSDTLANAIIRRARTIASKEVR.

Residues glutamine 27 and 44 to 51 (VPTAAGKT) each bind ATP. In terms of domain architecture, Helicase ATP-binding spans 31 to 197 (IEQIRKGRNV…WLDASLIKSD (167 aa)). The short motif at 142-145 (DEIH) is the DEAH box element. Residues 224–411 (SINQIIRETV…EAKVRFNTLA (188 aa)) form the Helicase C-terminal domain.

This sequence belongs to the helicase family. Hel308 subfamily. As to quaternary structure, monomer.

It carries out the reaction Couples ATP hydrolysis with the unwinding of duplex DNA by translocating in the 3'-5' direction.. It catalyses the reaction ATP + H2O = ADP + phosphate + H(+). Its function is as follows. DNA-dependent ATPase and 3'-5' DNA helicase that may be involved in repair of stalled replication forks. The protein is ATP-dependent DNA helicase Hel308 of Thermoplasma acidophilum (strain ATCC 25905 / DSM 1728 / JCM 9062 / NBRC 15155 / AMRC-C165).